The sequence spans 555 residues: Urocanate hydratase (555 aa).

NAD(+) is bound by residues glycine 51 to glycine 52, glutamine 129, glycine 175 to glycine 177, glutamate 195, asparagine 241 to alanine 242, glutamine 262 to histidine 266, tyrosine 272 to leucine 273, and tyrosine 321. Cysteine 409 is a catalytic residue. Residue glycine 491 coordinates NAD(+).

This sequence belongs to the urocanase family. Requires NAD(+) as cofactor.

The protein resides in the cytoplasm. It carries out the reaction 4-imidazolone-5-propanoate = trans-urocanate + H2O. Its pathway is amino-acid degradation; L-histidine degradation into L-glutamate; N-formimidoyl-L-glutamate from L-histidine: step 2/3. Functionally, catalyzes the conversion of urocanate to 4-imidazolone-5-propionate. The polypeptide is Urocanate hydratase (Hyphomonas neptunium (strain ATCC 15444)).